The sequence spans 396 residues: Tryptophan synthase beta chain (396 aa).

N6-(pyridoxal phosphate)lysine is present on lysine 88.

The protein belongs to the TrpB family. Tetramer of two alpha and two beta chains. Pyridoxal 5'-phosphate is required as a cofactor.

The enzyme catalyses (1S,2R)-1-C-(indol-3-yl)glycerol 3-phosphate + L-serine = D-glyceraldehyde 3-phosphate + L-tryptophan + H2O. It functions in the pathway amino-acid biosynthesis; L-tryptophan biosynthesis; L-tryptophan from chorismate: step 5/5. Functionally, the beta subunit is responsible for the synthesis of L-tryptophan from indole and L-serine. This is Tryptophan synthase beta chain from Actinobacillus pleuropneumoniae serotype 5b (strain L20).